A 297-amino-acid chain; its full sequence is MRAPAKVNLHLGVGAPREDGFHPLVTVYQAVGLYDDVTARAAPDWSVGVGLPDWMDDDAVPLNGANIVDRAADLLAAHHGVERTGELHIAKAIPVAGGMAGGSADAAAALVALDRLWGLDTSDDDLLALAARLGSDVPFALLGGTALGTGRGEVVTPVQDRGTWWWVVVPSDTGLSTPEVYRHFDRMFPDAPSQPVPADALLGAIAAGDTWALADALHNDLEAAAIDLRPELGRLIERGEEAGALRGLVSGSGPTCVFLCGSADHARSLAADLSGAGHPVVLAANGPVAGAHLVSYA.

Lysine 6 is a catalytic residue. 94–104 (PVAGGMAGGSA) contacts ATP. The active site involves aspartate 136.

The protein belongs to the GHMP kinase family. IspE subfamily.

It catalyses the reaction 4-CDP-2-C-methyl-D-erythritol + ATP = 4-CDP-2-C-methyl-D-erythritol 2-phosphate + ADP + H(+). Its pathway is isoprenoid biosynthesis; isopentenyl diphosphate biosynthesis via DXP pathway; isopentenyl diphosphate from 1-deoxy-D-xylulose 5-phosphate: step 3/6. Catalyzes the phosphorylation of the position 2 hydroxy group of 4-diphosphocytidyl-2C-methyl-D-erythritol. The protein is 4-diphosphocytidyl-2-C-methyl-D-erythritol kinase of Nocardioides sp. (strain ATCC BAA-499 / JS614).